A 43-amino-acid polypeptide reads, in one-letter code: Potassium channel toxin gamma-KTx 3.3 (43 aa).

Intrachain disulfides connect Cys5/Cys23, Cys11/Cys34, Cys20/Cys39, and Cys24/Cys41.

Belongs to the ergtoxin family. Gamma-KTx 3 subfamily. As to expression, expressed by the venom gland.

It localises to the secreted. Its function is as follows. Blocks Kv11/ERG potassium channels. The chain is Potassium channel toxin gamma-KTx 3.3 from Centruroides sculpturatus (Arizona bark scorpion).